The following is a 547-amino-acid chain: CTP synthase (547 aa).

An amidoligase domain region spans residues 1 to 265 (MTKFVFVTGG…DRIVCEKLAL (265 aa)). Ser-13 contributes to the CTP binding site. Residue Ser-13 coordinates UTP. Residues 14-19 (SLGKGI) and Asp-71 each bind ATP. Residues Asp-71 and Glu-139 each coordinate Mg(2+). CTP-binding positions include 146–148 (DIE), 186–191 (KTKPTQ), and Lys-222. Residues 186–191 (KTKPTQ) and Lys-222 each bind UTP. Residues 290–542 (TIGMVGKYVD…IKAALAHKHA (253 aa)) enclose the Glutamine amidotransferase type-1 domain. An L-glutamine-binding site is contributed by Gly-351. The active-site Nucleophile; for glutamine hydrolysis is the Cys-378. L-glutamine contacts are provided by residues 379–382 (LGMQ), Glu-402, and Arg-468. Active-site residues include His-515 and Glu-517.

The protein belongs to the CTP synthase family. As to quaternary structure, homotetramer.

The enzyme catalyses UTP + L-glutamine + ATP + H2O = CTP + L-glutamate + ADP + phosphate + 2 H(+). The catalysed reaction is L-glutamine + H2O = L-glutamate + NH4(+). It catalyses the reaction UTP + NH4(+) + ATP = CTP + ADP + phosphate + 2 H(+). Its pathway is pyrimidine metabolism; CTP biosynthesis via de novo pathway; CTP from UDP: step 2/2. Allosterically activated by GTP, when glutamine is the substrate; GTP has no effect on the reaction when ammonia is the substrate. The allosteric effector GTP functions by stabilizing the protein conformation that binds the tetrahedral intermediate(s) formed during glutamine hydrolysis. Inhibited by the product CTP, via allosteric rather than competitive inhibition. Its function is as follows. Catalyzes the ATP-dependent amination of UTP to CTP with either L-glutamine or ammonia as the source of nitrogen. Regulates intracellular CTP levels through interactions with the four ribonucleotide triphosphates. This Janthinobacterium sp. (strain Marseille) (Minibacterium massiliensis) protein is CTP synthase.